A 449-amino-acid chain; its full sequence is tRNA-2-methylthio-N(6)-dimethylallyladenosine synthase (449 aa).

Residues 3-124 enclose the MTTase N-terminal domain; sequence KMLYIKTYGC…LPTMLEKLDS (122 aa). [4Fe-4S] cluster is bound by residues cysteine 12, cysteine 48, cysteine 87, cysteine 163, cysteine 167, and cysteine 170. A Radical SAM core domain is found at 149-380; sequence KSPTVSGLVS…QAQLMQQQLE (232 aa). The TRAM domain occupies 383 to 447; that stretch reads QKLIGKVVPV…ASSLFGEVYA (65 aa).

The protein belongs to the methylthiotransferase family. MiaB subfamily. Monomer. The cofactor is [4Fe-4S] cluster.

The protein localises to the cytoplasm. The enzyme catalyses N(6)-dimethylallyladenosine(37) in tRNA + (sulfur carrier)-SH + AH2 + 2 S-adenosyl-L-methionine = 2-methylsulfanyl-N(6)-dimethylallyladenosine(37) in tRNA + (sulfur carrier)-H + 5'-deoxyadenosine + L-methionine + A + S-adenosyl-L-homocysteine + 2 H(+). Functionally, catalyzes the methylthiolation of N6-(dimethylallyl)adenosine (i(6)A), leading to the formation of 2-methylthio-N6-(dimethylallyl)adenosine (ms(2)i(6)A) at position 37 in tRNAs that read codons beginning with uridine. The sequence is that of tRNA-2-methylthio-N(6)-dimethylallyladenosine synthase from Orientia tsutsugamushi (strain Ikeda) (Rickettsia tsutsugamushi).